The primary structure comprises 759 residues: Phosphoribosylformylglycinamidine synthase subunit PurL (759 aa).

The active site involves H34. ATP is bound at residue Y37. E95 lines the Mg(2+) pocket. Residues 96 to 99 and R118 each bind substrate; that span reads SHNH. H97 functions as the Proton acceptor in the catalytic mechanism. D119 serves as a coordination point for Mg(2+). Q243 is a substrate binding site. D271 lines the Mg(2+) pocket. 315–317 contacts substrate; sequence ESQ. A disordered region spans residues 388 to 422; sequence DGAPMNDLASESPTQPDRDLPDPEPSLDEAVESVV. D520 and G557 together coordinate ATP. N558 serves as a coordination point for Mg(2+). Position 560 (S560) interacts with substrate.

This sequence belongs to the FGAMS family. As to quaternary structure, monomer. Part of the FGAM synthase complex composed of 1 PurL, 1 PurQ and 2 PurS subunits.

It is found in the cytoplasm. It carries out the reaction N(2)-formyl-N(1)-(5-phospho-beta-D-ribosyl)glycinamide + L-glutamine + ATP + H2O = 2-formamido-N(1)-(5-O-phospho-beta-D-ribosyl)acetamidine + L-glutamate + ADP + phosphate + H(+). The protein operates within purine metabolism; IMP biosynthesis via de novo pathway; 5-amino-1-(5-phospho-D-ribosyl)imidazole from N(2)-formyl-N(1)-(5-phospho-D-ribosyl)glycinamide: step 1/2. Part of the phosphoribosylformylglycinamidine synthase complex involved in the purines biosynthetic pathway. Catalyzes the ATP-dependent conversion of formylglycinamide ribonucleotide (FGAR) and glutamine to yield formylglycinamidine ribonucleotide (FGAM) and glutamate. The FGAM synthase complex is composed of three subunits. PurQ produces an ammonia molecule by converting glutamine to glutamate. PurL transfers the ammonia molecule to FGAR to form FGAM in an ATP-dependent manner. PurS interacts with PurQ and PurL and is thought to assist in the transfer of the ammonia molecule from PurQ to PurL. In Halorubrum lacusprofundi (strain ATCC 49239 / DSM 5036 / JCM 8891 / ACAM 34), this protein is Phosphoribosylformylglycinamidine synthase subunit PurL.